Here is a 288-residue protein sequence, read N- to C-terminus: Diaminopimelate epimerase (288 aa).

Positions 14 and 67 each coordinate substrate. Cysteine 76 serves as the catalytic Proton donor. Substrate is bound by residues glycine 77–asparagine 78, asparagine 166, asparagine 199, and glutamate 217–arginine 218. Cysteine 226 serves as the catalytic Proton acceptor. Glycine 227–threonine 228 is a substrate binding site.

This sequence belongs to the diaminopimelate epimerase family. As to quaternary structure, homodimer.

The protein localises to the cytoplasm. It catalyses the reaction (2S,6S)-2,6-diaminopimelate = meso-2,6-diaminopimelate. It functions in the pathway amino-acid biosynthesis; L-lysine biosynthesis via DAP pathway; DL-2,6-diaminopimelate from LL-2,6-diaminopimelate: step 1/1. Catalyzes the stereoinversion of LL-2,6-diaminopimelate (L,L-DAP) to meso-diaminopimelate (meso-DAP), a precursor of L-lysine and an essential component of the bacterial peptidoglycan. The sequence is that of Diaminopimelate epimerase from Bacillus cereus (strain B4264).